Here is a 318-residue protein sequence, read N- to C-terminus: Taste receptor type 2 member 60 (318 aa).

The Extracellular segment spans residues 1-7; it reads MNGDHMV. Residues 8–28 traverse the membrane as a helical segment; it reads LGSSVTDKKAIILVTILLLLR. Topologically, residues 29-40 are cytoplasmic; the sequence is LVAIAGNGFITA. Residues 41 to 61 form a helical membrane-spanning segment; that stretch reads ALGVEWVLRRMLLPCDKLLVS. The Extracellular portion of the chain corresponds to 62–88; sequence LGASHFCLQSVVMGKTIYVFLYPMAFP. Residues 89–109 traverse the membrane as a helical segment; it reads YNPVLQFLAFQWDFLNAATLW. Topologically, residues 110 to 128 are cytoplasmic; the sequence is FSTWLSVFYCVKIATFTHP. A helical transmembrane segment spans residues 129–149; that stretch reads VFFWLKHKLSGWLPWMIFSYV. Topologically, residues 150–183 are extracellular; it reads GLSSFTTILFFIGNHRMYQNYLKNHLQPWNVTGN. The N-linked (GlcNAc...) asparagine glycan is linked to asparagine 179. A helical transmembrane segment spans residues 184-204; sequence SIRSYCEKFYLFPLKMITWTM. Residues 205–234 lie on the Cytoplasmic side of the membrane; that stretch reads PTAVFFICMILLITSLGRHMKKALLTTSGF. A helical membrane pass occupies residues 235–255; it reads REPSVQAHIKALLALLSFAML. Topologically, residues 256 to 264 are extracellular; the sequence is FISYFLSLV. The chain crosses the membrane as a helical span at residues 265 to 285; it reads FSAAGIFPPLDFKFWVWESVI. Residues 286 to 318 lie on the Cytoplasmic side of the membrane; that stretch reads YLCAAVHPIILLFSNCRLRAVLKSRRSSRCGTP.

Belongs to the G-protein coupled receptor T2R family.

Its subcellular location is the membrane. Its function is as follows. Receptor that may play a role in the perception of bitterness and is gustducin-linked. May play a role in sensing the chemical composition of the gastrointestinal content. The activity of this receptor may stimulate alpha gustducin, mediate PLC-beta-2 activation and lead to the gating of TRPM5. The polypeptide is Taste receptor type 2 member 60 (TAS2R60) (Pan paniscus (Pygmy chimpanzee)).